The chain runs to 374 residues: Flagellar P-ring protein (374 aa).

Positions 1 to 29 are cleaved as a signal peptide; the sequence is MPGVGISRIVRIAVAALVALAPLMTPAHA.

Belongs to the FlgI family. In terms of assembly, the basal body constitutes a major portion of the flagellar organelle and consists of four rings (L,P,S, and M) mounted on a central rod.

Its subcellular location is the periplasm. It is found in the bacterial flagellum basal body. In terms of biological role, assembles around the rod to form the L-ring and probably protects the motor/basal body from shearing forces during rotation. This chain is Flagellar P-ring protein, found in Nitrobacter hamburgensis (strain DSM 10229 / NCIMB 13809 / X14).